Consider the following 484-residue polypeptide: F-box/LRR-repeat protein At3g59210 (484 aa).

The F-box domain maps to 6–54 (KDIINCLPDNLLCQILSNLSTKEAALTSLLSKRWRYLFALVPNLDFDVL). LRR repeat units lie at residues 144 to 170 (KIGPKDGPRVKLRNVCLPKLKTLNLDS), 172 to 197 (VFEEGKIGFAKLLSGCPVLEELSLLN), 205 to 234 (SCSVSSKILKRLTLYCAHSSRNPKSVSFDT), 303 to 334 (TLYLSYDTLETLNLCCQVIPVFNNLTHLTIES), and 335 to 360 (HPELGWESLPNLLKSCPNLGTLVFQG).

The chain is F-box/LRR-repeat protein At3g59210 from Arabidopsis thaliana (Mouse-ear cress).